A 296-amino-acid chain; its full sequence is MDMSSIASRLGLSGSRPVVGKAAELRRLCDVTFDSSVLGIGEVCKAIICLEIAASKFQVIFDRAEAVRMSGMSEKAYIRSFNALQNGLGVKTTLDVRELGIQFGCVRLIPFVQKGLSLYKERFLAALPPSRRASTDFGRPVFTAASFYLCAKRHKLKVDKLKLIDLCGTSSSEFTTVSTSMADLCFDVFGIAKEKKDAKSIKGSRELLDVLPSKRKHDDDSDSSGESSGDDQDELDLPTYKRHKKMEKEAYNDWKSSVLSSNKQTKPDPAKPRKQAQLNFKKKPSDMALEVSSAAN.

Positions 212–296 are disordered; that stretch reads PSKRKHDDDS…MALEVSSAAN (85 aa). The span at 220 to 236 shows a compositional bias: acidic residues; it reads DSDSSGESSGDDQDELD. Positions 254–264 are enriched in polar residues; sequence WKSSVLSSNKQ.

The protein belongs to the ORC6 family. Component of the origin recognition complex (ORC) composed of at least ORC1, ORC2, ORC3, ORC4, ORC5 and ORC6. ORC is regulated in a cell-cycle and development dependent manner. It is sequentially assembled at the exit from anaphase of mitosis and disassembled as cells enter S phase.

The protein localises to the nucleus. Component of the origin recognition complex (ORC) that binds origins of replication. DNA-binding is ATP-dependent. The specific DNA sequences that define origins of replication have not been identified yet. ORC is required to assemble the pre-replication complex necessary to initiate DNA replication. The sequence is that of Origin of replication complex subunit 6 from Oryza sativa subsp. indica (Rice).